We begin with the raw amino-acid sequence, 56 residues long: Large ribosomal subunit protein bL33c (56 aa).

Belongs to the bacterial ribosomal protein bL33 family.

It is found in the plastid. Its subcellular location is the chloroplast. The sequence is that of Large ribosomal subunit protein bL33c (rpl33) from Guillardia theta (Cryptophyte).